We begin with the raw amino-acid sequence, 314 residues long: Carbamate kinase (314 aa).

It belongs to the carbamate kinase family. As to quaternary structure, homodimer.

It catalyses the reaction hydrogencarbonate + NH4(+) + ATP = carbamoyl phosphate + ADP + H2O + H(+). The protein operates within metabolic intermediate metabolism; carbamoyl phosphate degradation; CO(2) and NH(3) from carbamoyl phosphate: step 1/1. The chain is Carbamate kinase (CBK) from Trichomonas vaginalis.